Consider the following 899-residue polypeptide: UPF0182 protein Mhun_1303 (899 aa).

The next 7 helical transmembrane spans lie at 6–26 (LLIF…DLLS), 39–59 (VFLT…LLFF), 93–113 (VAAG…LAFL), 136–156 (LPFY…TLII), 196–216 (FLPQ…AFLW), 240–260 (ITIP…LLFL), and 271–291 (IAYG…AGFL).

This sequence belongs to the UPF0182 family.

The protein localises to the cell membrane. The chain is UPF0182 protein Mhun_1303 from Methanospirillum hungatei JF-1 (strain ATCC 27890 / DSM 864 / NBRC 100397 / JF-1).